A 493-amino-acid chain; its full sequence is Intermediate cleaving peptidase 55, mitochondrial (493 aa).

The transit peptide at Met1–Ser19 directs the protein to the mitochondrion. Residues Asp296, Asp307, His383, Glu410, and Glu433 each coordinate Mn(2+).

This sequence belongs to the peptidase M24B family. It depends on Mn(2+) as a cofactor.

It is found in the mitochondrion. Its subcellular location is the nucleus. In terms of biological role, aminopeptidase which cleaves preprotein intermediates that carry destabilizing N-ter amino acid residues after the mitochondrial processing peptidase (MPP) cleavage site and is thus critical for stabilization of the mitochondrial proteome. This is Intermediate cleaving peptidase 55, mitochondrial from Arabidopsis thaliana (Mouse-ear cress).